We begin with the raw amino-acid sequence, 238 residues long: MLVIPAIDLIGGEVVRLEKGDFARKTVYARDPAEKAAELVRDGASLIHVVDLDGAKAGWPVNLDAVRAICAVPGAEVELGGGLRSLPDIEKVLELGVRYVVLGTAAVERLDLVRQACARFPGRVRSGIDARNGEVKIAGWLEGTGLGAAEVARRVKEAGVGLVEYTDVGRDGMFTGVDAEGAARLQAEAGVQVVASGGVAGLDDVRACRAAGLAGVIVGKALYEGRIALAEAVRAAAE.

The active-site Proton acceptor is the Asp-8. The active-site Proton donor is Asp-129.

It belongs to the HisA/HisF family.

The protein localises to the cytoplasm. It catalyses the reaction 1-(5-phospho-beta-D-ribosyl)-5-[(5-phospho-beta-D-ribosylamino)methylideneamino]imidazole-4-carboxamide = 5-[(5-phospho-1-deoxy-D-ribulos-1-ylimino)methylamino]-1-(5-phospho-beta-D-ribosyl)imidazole-4-carboxamide. The protein operates within amino-acid biosynthesis; L-histidine biosynthesis; L-histidine from 5-phospho-alpha-D-ribose 1-diphosphate: step 4/9. In Anaeromyxobacter dehalogenans (strain 2CP-1 / ATCC BAA-258), this protein is 1-(5-phosphoribosyl)-5-[(5-phosphoribosylamino)methylideneamino] imidazole-4-carboxamide isomerase.